The primary structure comprises 375 residues: Ribosomal RNA large subunit methyltransferase G (375 aa).

The protein belongs to the methyltransferase superfamily. RlmG family.

The protein localises to the cytoplasm. It catalyses the reaction guanosine(1835) in 23S rRNA + S-adenosyl-L-methionine = N(2)-methylguanosine(1835) in 23S rRNA + S-adenosyl-L-homocysteine + H(+). In terms of biological role, specifically methylates the guanine in position 1835 (m2G1835) of 23S rRNA. The sequence is that of Ribosomal RNA large subunit methyltransferase G from Stutzerimonas stutzeri (strain A1501) (Pseudomonas stutzeri).